Consider the following 66-residue polypeptide: DNA-directed RNA polymerase subunit omega (66 aa).

Belongs to the RNA polymerase subunit omega family. The RNAP catalytic core consists of 2 alpha, 1 beta, 1 beta' and 1 omega subunit. When a sigma factor is associated with the core the holoenzyme is formed, which can initiate transcription.

It catalyses the reaction RNA(n) + a ribonucleoside 5'-triphosphate = RNA(n+1) + diphosphate. Promotes RNA polymerase assembly. Latches the N- and C-terminal regions of the beta' subunit thereby facilitating its interaction with the beta and alpha subunits. The protein is DNA-directed RNA polymerase subunit omega of Bacillus licheniformis (strain ATCC 14580 / DSM 13 / JCM 2505 / CCUG 7422 / NBRC 12200 / NCIMB 9375 / NCTC 10341 / NRRL NRS-1264 / Gibson 46).